Consider the following 118-residue polypeptide: Ig heavy chain V region AC38 205.12 (118 aa).

Positions 1–98 (EVQLQQSGPE…EDSAVYYCAR (98 aa)) are v segment. Cysteine 22 and cysteine 96 are disulfide-bonded. The d segment stretch occupies residues 99–104 (GYGYDP). The tract at residues 105–118 (FDVWGTGTTVTVSS) is j segment.

The polypeptide is Ig heavy chain V region AC38 205.12 (Mus musculus (Mouse)).